A 340-amino-acid chain; its full sequence is UDP-3-O-(3-hydroxymyristoyl)glucosamine N-acyltransferase (340 aa).

His239 functions as the Proton acceptor in the catalytic mechanism.

Belongs to the transferase hexapeptide repeat family. LpxD subfamily. Homotrimer.

The enzyme catalyses a UDP-3-O-[(3R)-3-hydroxyacyl]-alpha-D-glucosamine + a (3R)-hydroxyacyl-[ACP] = a UDP-2-N,3-O-bis[(3R)-3-hydroxyacyl]-alpha-D-glucosamine + holo-[ACP] + H(+). It catalyses the reaction UDP-3-O-[(3R)-3-hydroxytetradecanoyl]-alpha-D-glucosamine + (3R)-hydroxytetradecanoyl-[ACP] = UDP-2-N,3-O-bis[(3R)-3-hydroxytetradecanoyl]-alpha-D-glucosamine + holo-[ACP] + H(+). The protein operates within glycolipid biosynthesis; lipid IV(A) biosynthesis; lipid IV(A) from (3R)-3-hydroxytetradecanoyl-[acyl-carrier-protein] and UDP-N-acetyl-alpha-D-glucosamine: step 3/6. Catalyzes the N-acylation of UDP-3-O-(hydroxytetradecanoyl)glucosamine using 3-hydroxytetradecanoyl-ACP as the acyl donor. Is involved in the biosynthesis of lipid A, a phosphorylated glycolipid that anchors the lipopolysaccharide to the outer membrane of the cell. The sequence is that of UDP-3-O-(3-hydroxymyristoyl)glucosamine N-acyltransferase from Yersinia enterocolitica.